The sequence spans 415 residues: MAALQPVRGTHDYLPDEARSHRHVEETARTVAERFGFGEIITPIFEFTDVFARTLGDTSDVVTKEMYTFTDRSGDSLTLRPENTAGVARAFISGGLAQNVPVKLFYRGPMFRHERPQKGRLRQFHQVGVELIGAENPLADVEVIALGSQLLGALGVGGRTILHLNSLGDPESREAYRAALVSYLSGHRDSLSRDSLERLERNPLRVLDSKDEGDRAVVAGAPRLIDHLNEASRAFFAGVTGGLEALGIPFEIDPLLVRGLDYYGHTAFEFVTTDLGAQGTVMAGGRYDGLIRQMGGSQTPGVGWAAGVERLSMLMAADRVGAPRPLAMIPAGPDDEVEALKLAHALRQGGLFVDFGYSGNLGKRMKRANRINARAAIILGGEERANGTVVVRDLDSGEQETIGLAVLEEFLARFL.

The protein belongs to the class-II aminoacyl-tRNA synthetase family. As to quaternary structure, homodimer.

It localises to the cytoplasm. It catalyses the reaction tRNA(His) + L-histidine + ATP = L-histidyl-tRNA(His) + AMP + diphosphate + H(+). The polypeptide is Histidine--tRNA ligase (Rhodospirillum rubrum (strain ATCC 11170 / ATH 1.1.1 / DSM 467 / LMG 4362 / NCIMB 8255 / S1)).